Consider the following 383-residue polypeptide: Queuine tRNA-ribosyltransferase (383 aa).

Residue D95 is the Proton acceptor of the active site. Substrate-binding positions include 95–99 (DSGGF), D149, Q195, and G222. Residues 253 to 259 (GVGSPDS) are RNA binding. D272 serves as the catalytic Nucleophile. The segment at 277-281 (TRIAR) is RNA binding; important for wobble base 34 recognition. Residues C310, C312, C315, and H341 each contribute to the Zn(2+) site.

This sequence belongs to the queuine tRNA-ribosyltransferase family. In terms of assembly, homodimer. Within each dimer, one monomer is responsible for RNA recognition and catalysis, while the other monomer binds to the replacement base PreQ1. The cofactor is Zn(2+).

The enzyme catalyses 7-aminomethyl-7-carbaguanine + guanosine(34) in tRNA = 7-aminomethyl-7-carbaguanosine(34) in tRNA + guanine. It participates in tRNA modification; tRNA-queuosine biosynthesis. Functionally, catalyzes the base-exchange of a guanine (G) residue with the queuine precursor 7-aminomethyl-7-deazaguanine (PreQ1) at position 34 (anticodon wobble position) in tRNAs with GU(N) anticodons (tRNA-Asp, -Asn, -His and -Tyr). Catalysis occurs through a double-displacement mechanism. The nucleophile active site attacks the C1' of nucleotide 34 to detach the guanine base from the RNA, forming a covalent enzyme-RNA intermediate. The proton acceptor active site deprotonates the incoming PreQ1, allowing a nucleophilic attack on the C1' of the ribose to form the product. After dissociation, two additional enzymatic reactions on the tRNA convert PreQ1 to queuine (Q), resulting in the hypermodified nucleoside queuosine (7-(((4,5-cis-dihydroxy-2-cyclopenten-1-yl)amino)methyl)-7-deazaguanosine). The sequence is that of Queuine tRNA-ribosyltransferase from Shouchella clausii (strain KSM-K16) (Alkalihalobacillus clausii).